Here is a 676-residue protein sequence, read N- to C-terminus: Long-chain-fatty-acid--CoA ligase 1 (676 aa).

246-257 (YTSGSTGLPKGV) lines the ATP pocket. The FACS motif lies at 511 to 560 (DGWFRTGDVGELTPEGLLRIIDRKKNLVKTQNGEYIALEKLESRYRTSSL).

The protein belongs to the ATP-dependent AMP-binding enzyme family. Requires Mg(2+) as cofactor.

The enzyme catalyses a long-chain fatty acid + ATP + CoA = a long-chain fatty acyl-CoA + AMP + diphosphate. In terms of biological role, esterification, concomitant with transport, of exogenous long-chain fatty acids into metabolically active CoA thioesters for subsequent degradation or incorporation into phospholipids. It may supplement intracellular myristoyl-CoA pools from exogenous myristate. Preferentially acts on C12:0-C16:0 fatty acids with myristic and pentadecanic acid (C15:0) having the highest activities. Appears to play a role in the maintenance of cell viability during stationary phase. The chain is Long-chain-fatty-acid--CoA ligase 1 (lcf1) from Schizosaccharomyces pombe (strain 972 / ATCC 24843) (Fission yeast).